The chain runs to 655 residues: Protein-glucosylgalactosylhydroxylysine glucosidase (655 aa).

Residue W258–D259 participates in substrate binding. Residue E388 is the Proton donor of the active site. K456–Q457 is a substrate binding site.

Belongs to the glycosyl hydrolase 65 family.

The catalysed reaction is (5R)-5-O-[alpha-D-glucosyl-(1-&gt;2)-beta-D-galactosyl]-5-hydroxy-L-lysyl-[collagen] + H2O = (5R)-5-O-(beta-D-galactosyl)-5-hydroxy-L-lysyl-[collagen] + D-glucose. Catalyzes the hydrolysis of glucose from the disaccharide unit linked to hydroxylysine residues of collagen and collagen-like proteins. The sequence is that of Protein-glucosylgalactosylhydroxylysine glucosidase from Danio rerio (Zebrafish).